The primary structure comprises 315 residues: Acetyl-coenzyme A carboxylase carboxyl transferase subunit alpha (315 aa).

In terms of domain architecture, CoA carboxyltransferase C-terminal spans 35–289 (KLSKKRFELM…RKAVAAELKI (255 aa)).

The protein belongs to the AccA family. In terms of assembly, acetyl-CoA carboxylase is a heterohexamer composed of biotin carboxyl carrier protein (AccB), biotin carboxylase (AccC) and two subunits each of ACCase subunit alpha (AccA) and ACCase subunit beta (AccD).

Its subcellular location is the cytoplasm. It carries out the reaction N(6)-carboxybiotinyl-L-lysyl-[protein] + acetyl-CoA = N(6)-biotinyl-L-lysyl-[protein] + malonyl-CoA. The protein operates within lipid metabolism; malonyl-CoA biosynthesis; malonyl-CoA from acetyl-CoA: step 1/1. Component of the acetyl coenzyme A carboxylase (ACC) complex. First, biotin carboxylase catalyzes the carboxylation of biotin on its carrier protein (BCCP) and then the CO(2) group is transferred by the carboxyltransferase to acetyl-CoA to form malonyl-CoA. In Francisella tularensis subsp. mediasiatica (strain FSC147), this protein is Acetyl-coenzyme A carboxylase carboxyl transferase subunit alpha.